Consider the following 262-residue polypeptide: MSDLKLSPLVIKLGGAALDCAETLSKLFGAIAQYQNQAQRRIVIVHGGGYLVDDLMAKLQLKSVKKDGLRVTPYDQIPIIAGALAGTANKMLQGQAIKDGINAVGLSLADGGLCHVEELDPELGAVGKATPGDSTLLQAILATGAMPIISSIGLTAQGQMMNVNADQAAVAVAGALDAELVLLSDVSGVLDGKGHLIATLDAKQADALIAGKVITDGMIVKVKAALEAAQDLGRPIEVATWRYPEKLAKLFGGESIGTRFLP.

Substrate-binding positions include 48–49 (GG), Arg70, and Asn162.

It belongs to the acetylglutamate kinase family. ArgB subfamily.

The protein localises to the cytoplasm. The enzyme catalyses N-acetyl-L-glutamate + ATP = N-acetyl-L-glutamyl 5-phosphate + ADP. Its pathway is amino-acid biosynthesis; L-arginine biosynthesis; N(2)-acetyl-L-ornithine from L-glutamate: step 2/4. In terms of biological role, catalyzes the ATP-dependent phosphorylation of N-acetyl-L-glutamate. The protein is Acetylglutamate kinase of Vibrio cholerae serotype O1 (strain ATCC 39541 / Classical Ogawa 395 / O395).